The primary structure comprises 368 residues: MSLFGSTSGFGTGGTSMFGSTTTDNHNPMKDIEVTSSPDDSIGCLSFSPPTLPGNFLIAGSWANDVRCWEVQDSGQTIPKAQQMHTGPVLDVCWSDDGSKVFTASCDKTAKMWDLNSNQAIQIAQHDAPVKTIHWIKAPNYSCVMTGSWDKTLKFWDTRSSNPMMVLQLPERCYCADVIYPMAVVATAERGLIVYQLENQPSEFRRIESPLKHQHRCVAIFKDKQNKPTGFALGSIEGRVAIHYINPPNPAKDNFTFKCHRSNGTNTSAPQDIYAVNGIAFHPVHGTLATVGSDGRFSFWDKDARTKLKTSEQLDQPIAACCFNHNGNIFAYASSYDWSKGHEFYNPQKKNYIFLRNAAEELKPRNKK.

A disordered region spans residues 15-34 (TSMFGSTTTDNHNPMKDIEV). 7 WD repeats span residues 37 to 79 (SPDD…QTIP), 84 to 114 (MHTGPVLDVCWSDDGSKVFTASCDKTAKMWD), 125 to 157 (QHDAPVKTIHWIKAPNYSCVMTGSWDKTLKFWD), 168 to 206 (QLPERCYCADVIYPMAVVATAERGLIVYQLENQPSEFRR), 215 to 255 (HRCV…KDNF), 271 to 301 (QDIYAVNGIAFHPVHGTLATVGSDGRFSFWD), and 310 to 346 (TSEQLDQPIAACCFNHNGNIFAYASSYDWSKGHEFYN). At T229 the chain carries Phosphothreonine.

The protein belongs to the WD repeat rae1 family. As to quaternary structure, interacts with NUMA1 (via N-terminal end of the coiled-coil domain); this interaction promotes spindle formation in mitosis. Interacts with NUP98. Interacts with MYCBP2. Interacts with USP11.

The protein localises to the cytoplasm. Its subcellular location is the nucleus. It localises to the cytoskeleton. It is found in the spindle pole. Its function is as follows. Plays a role in mitotic bipolar spindle formation. Binds mRNA. May function in nucleocytoplasmic transport and in directly or indirectly attaching cytoplasmic mRNPs to the cytoskeleton. The protein is mRNA export factor (Rae1) of Mus musculus (Mouse).